The primary structure comprises 318 residues: Putative 2-hydroxyacid dehydrogenase SSP0606 (318 aa).

Residues 156–157, 235–237, and Asp-261 each bind NAD(+); these read EI and ASR. The active site involves Arg-237. Residue Glu-266 is part of the active site. His-284 serves as the catalytic Proton donor. NAD(+) is bound at residue 284–287; it reads HIGN.

This sequence belongs to the D-isomer specific 2-hydroxyacid dehydrogenase family.

The protein is Putative 2-hydroxyacid dehydrogenase SSP0606 of Staphylococcus saprophyticus subsp. saprophyticus (strain ATCC 15305 / DSM 20229 / NCIMB 8711 / NCTC 7292 / S-41).